Here is a 503-residue protein sequence, read N- to C-terminus: Maturase K (503 aa).

This sequence belongs to the intron maturase 2 family. MatK subfamily.

It localises to the plastid. Its subcellular location is the chloroplast. In terms of biological role, usually encoded in the trnK tRNA gene intron. Probably assists in splicing its own and other chloroplast group II introns. This is Maturase K from Syzygium anisatum (Aniseed myrtle).